A 197-amino-acid chain; its full sequence is A-kinase anchor protein 14 (197 aa).

Composition is skewed to polar residues over residues Met1 to Lys11 and Ala19 to Asp29. Positions Met1 to Asp29 are disordered. Positions Glu35–Val52 are RII-binding.

Binds to type II regulatory subunits (RII). As to expression, present in cilia (at protein level). Expressed in tissues containing axoneme-based organelles (cilia and/or flagella): trachea and testis. Highly expressed in airway cilia.

The protein resides in the cytoplasm. In terms of biological role, binds to type II regulatory subunits of protein kinase A and anchors/targets them. The polypeptide is A-kinase anchor protein 14 (AKAP14) (Homo sapiens (Human)).